Here is a 78-residue protein sequence, read N- to C-terminus: U7-lycotoxin-Ls1d (78 aa).

The N-terminal stretch at 1 to 22 (MKLIIFTGLALLLIVSLIDVEA) is a signal peptide. A propeptide spanning residues 23-26 (QNEG) is cleaved from the precursor.

It belongs to the neurotoxin 19 (CSTX) family. 07 (U7-Lctx) subfamily. Post-translationally, contains 4 disulfide bonds. Expressed by the venom gland.

It is found in the secreted. This chain is U7-lycotoxin-Ls1d, found in Lycosa singoriensis (Wolf spider).